Reading from the N-terminus, the 208-residue chain is Octanoyltransferase (208 aa).

Positions 30-208 (GTASEAVFIL…ILKQEFYKIF (179 aa)) constitute a BPL/LPL catalytic domain. Residues 69 to 76 (RGGKFTYH), 142 to 144 (SIG), and 155 to 157 (GVA) contribute to the substrate site. The active-site Acyl-thioester intermediate is the C173.

This sequence belongs to the LipB family.

The protein resides in the cytoplasm. The enzyme catalyses octanoyl-[ACP] + L-lysyl-[protein] = N(6)-octanoyl-L-lysyl-[protein] + holo-[ACP] + H(+). It participates in protein modification; protein lipoylation via endogenous pathway; protein N(6)-(lipoyl)lysine from octanoyl-[acyl-carrier-protein]: step 1/2. Catalyzes the transfer of endogenously produced octanoic acid from octanoyl-acyl-carrier-protein onto the lipoyl domains of lipoate-dependent enzymes. Lipoyl-ACP can also act as a substrate although octanoyl-ACP is likely to be the physiological substrate. This Orientia tsutsugamushi (strain Ikeda) (Rickettsia tsutsugamushi) protein is Octanoyltransferase.